Reading from the N-terminus, the 429-residue chain is tRNA threonylcarbamoyladenosine dehydratase 1 (429 aa).

Helical transmembrane passes span 3–23 and 74–94; these read NNTW…TQLA and EQYI…TMLI. A Phosphoserine modification is found at S259. A helical membrane pass occupies residues 279–299; sequence LPELGTMPGIFGLSIATWILT.

It belongs to the HesA/MoeB/ThiF family.

The protein resides in the mitochondrion outer membrane. Its function is as follows. Catalyzes the ATP-dependent dehydration of threonylcarbamoyladenosine at position 37 (t(6)A37) to form cyclic t(6)A37 (ct(6)A37) in tRNAs that read codons beginning with adenine. The protein is tRNA threonylcarbamoyladenosine dehydratase 1 (TCD1) of Saccharomyces cerevisiae (strain ATCC 204508 / S288c) (Baker's yeast).